Reading from the N-terminus, the 222-residue chain is Large ribosomal subunit protein mL64 (222 aa).

3 disordered regions span residues 1–51, 136–170, and 182–222; these read MAAP…PRWQ, RRQQ…HVDP, and LEKQ…TPDS. A compositionally biased stretch (basic and acidic residues) spans 141 to 170; the sequence is ARREKAQADKERRARLQAEAQERLGYHVDP. Residues 144–213 are a coiled coil; the sequence is EKAQADKERR…AAMAAAAAQD (70 aa). The short motif at 184 to 200 is the Nuclear localization signal element; sequence KQHRKRLKEEKQRKKKE. Residues 203 to 212 are compositionally biased toward low complexity; that stretch reads AAAMAAAAAQ.

It belongs to the mitochondrion-specific ribosomal protein mL64 family. As to quaternary structure, component of the mitochondrial ribosome large subunit (39S) which comprises a 16S rRNA and about 50 distinct proteins. Interacts with GADD45A, GADD45B and GADD45G. Interacts with NR4A1 via the NR4A1 AB domain. Interacts with ATAD3A and ATAD3B.

It localises to the mitochondrion. It is found in the nucleus. Its function is as follows. Acts as a negative regulator of G1 to S cell cycle phase progression by inhibiting cyclin-dependent kinases. Inhibitory effects are additive with GADD45 proteins but also occur in the absence of GADD45 proteins. Acts as a repressor of the orphan nuclear receptor NR4A1 by inhibiting AB domain-mediated transcriptional activity. May be involved in the hormone-mediated regulation of NR4A1 transcriptional activity. May play a role in mitochondrial protein synthesis. The chain is Large ribosomal subunit protein mL64 (GADD45GIP1) from Bos taurus (Bovine).